We begin with the raw amino-acid sequence, 560 residues long: Membrane protein insertase YidC (560 aa).

Residues 1-21 (MDIKRTILIAALAVVSYVMVL) form a helical membrane-spanning segment. The interval 42–66 (VAPGLPDGVPAGNNGASADVPSANA) is disordered. Transmembrane regions (helical) follow at residues 341–361 (LELTVDYGFLWFIAQPIFWLL), 367–387 (LLGNWGWSIIVLTMLIKGLFF), 437–457 (LGGCLPILVQMPVFLALYWVL), 468–488 (WILWITDLSIKDPFFILPIIM), and 515–535 (PIIFTFFFLWFPAGLVLYWVV).

This sequence belongs to the OXA1/ALB3/YidC family. Type 1 subfamily. Interacts with the Sec translocase complex via SecD. Specifically interacts with transmembrane segments of nascent integral membrane proteins during membrane integration.

It localises to the cell inner membrane. Functionally, required for the insertion and/or proper folding and/or complex formation of integral membrane proteins into the membrane. Involved in integration of membrane proteins that insert both dependently and independently of the Sec translocase complex, as well as at least some lipoproteins. Aids folding of multispanning membrane proteins. This Pseudomonas putida (strain ATCC 700007 / DSM 6899 / JCM 31910 / BCRC 17059 / LMG 24140 / F1) protein is Membrane protein insertase YidC.